The following is a 391-amino-acid chain: Esterase (391 aa).

Residues 1–26 (MEFPETNNNPIITLSFLLCMLSLAYA) form the signal peptide. Ser-41 (nucleophile) is an active-site residue. 3 N-linked (GlcNAc...) asparagine glycosylation sites follow: Asn-186, Asn-193, and Asn-313. Catalysis depends on residues Asp-347 and His-350.

Belongs to the 'GDSL' lipolytic enzyme family. The N-terminus is blocked. Post-translationally, glycosylated.

Functionally, has lipase and esterase activities. May be involved in plant defense. The sequence is that of Esterase from Hevea brasiliensis (Para rubber tree).